A 475-amino-acid polypeptide reads, in one-letter code: Glutamyl-tRNA(Gln) amidotransferase subunit A (475 aa).

Residues Lys76 and Ser151 each act as charge relay system in the active site. The active-site Acyl-ester intermediate is Ser175.

The protein belongs to the amidase family. GatA subfamily. In terms of assembly, heterotrimer of A, B and C subunits.

The enzyme catalyses L-glutamyl-tRNA(Gln) + L-glutamine + ATP + H2O = L-glutaminyl-tRNA(Gln) + L-glutamate + ADP + phosphate + H(+). Allows the formation of correctly charged Gln-tRNA(Gln) through the transamidation of misacylated Glu-tRNA(Gln) in organisms which lack glutaminyl-tRNA synthetase. The reaction takes place in the presence of glutamine and ATP through an activated gamma-phospho-Glu-tRNA(Gln). This chain is Glutamyl-tRNA(Gln) amidotransferase subunit A, found in Pelodictyon phaeoclathratiforme (strain DSM 5477 / BU-1).